The following is a 637-amino-acid chain: BUD13 homolog (637 aa).

The tract at residues 18 to 53 is disordered; that stretch reads SGTDAGLEGGPEAGRKRRKKRPKPGGAGGKGMRIVD. Lys65 participates in a covalent cross-link: Glycyl lysine isopeptide (Lys-Gly) (interchain with G-Cter in SUMO2). The interval 104–470 is disordered; it reads LLGGHGEDGH…KKQDQDTTDL (367 aa). Positions 108–119 are enriched in basic and acidic residues; that stretch reads HGEDGHFHHDDQ. Thr131 carries the phosphothreonine modification. Ser135 is subject to Phosphoserine. The residue at position 144 (Thr144) is a Phosphothreonine. Ser148 bears the Phosphoserine mark. A Phosphothreonine modification is found at Thr157. Ser161 carries the post-translational modification Phosphoserine. Thr170 carries the post-translational modification Phosphothreonine. A Phosphoserine modification is found at Ser174. Thr183 carries the phosphothreonine modification. The residue at position 187 (Ser187) is a Phosphoserine. Phosphothreonine occurs at positions 196 and 209. Ser213 carries the phosphoserine modification. Position 222 is a phosphothreonine (Thr222). Phosphoserine occurs at positions 226, 238, 259, 264, 272, 284, 285, and 297. Over residues 260 to 275 the composition is skewed to polar residues; that stretch reads LGTSSPRQTHNHSPTA. Basic and acidic residues predominate over residues 295–315; sequence HESPDLELHKAKSSKAAERAP. A compositionally biased stretch (polar residues) spans 318–335; sequence AASQSGLGPSHPSLSTNS. A phosphoserine mark is found at Ser341 and Ser344. A compositionally biased stretch (basic and acidic residues) spans 353-362; that stretch reads AHFEAKKQLD. Phosphoserine is present on residues Ser371, Ser373, Ser376, Ser410, and Ser426. A compositionally biased stretch (basic residues) spans 430–439; it reads RSPRPGKKTA. The span at 453–465 shows a compositional bias: basic and acidic residues; that stretch reads VQREHQELKKQDQ. Residues 490-538 adopt a coiled-coil conformation; it reads NLKLERLEQRRKAEKDSERDELYAQWGKGLAQSRQQQQNVEDAMKEMQK. Tyr512 carries the post-translational modification Phosphotyrosine. The interval 553–595 is disordered; sequence LREQEREGDPMANFIKKNKAKENKNKKVKPRYSGPAPPPNRFN. Position 585 is a phosphoserine (Ser585).

It belongs to the CWC26 family. As to quaternary structure, part of the activated spliceosome B/catalytic step 1 spliceosome, one of the forms of the spliceosome which has a well-formed active site but still cannot catalyze the branching reaction and is composed of at least 52 proteins, the U2, U5 and U6 snRNAs and the pre-mRNA. Component of the minor spliceosome, which splices U12-type introns.

Its subcellular location is the nucleus. Involved in pre-mRNA splicing as component of the activated spliceosome. As a component of the minor spliceosome, involved in the splicing of U12-type introns in pre-mRNAs. In Mus musculus (Mouse), this protein is BUD13 homolog (Bud13).